Reading from the N-terminus, the 316-residue chain is tRNA dimethylallyltransferase (316 aa).

9–16 is an ATP binding site; sequence GPTASGKS. A substrate-binding site is contributed by 11–16; it reads TASGKS. Interaction with substrate tRNA stretches follow at residues 34 to 37 and 158 to 162; these read DSMQ and QRLAR.

This sequence belongs to the IPP transferase family. As to quaternary structure, monomer. The cofactor is Mg(2+).

It carries out the reaction adenosine(37) in tRNA + dimethylallyl diphosphate = N(6)-dimethylallyladenosine(37) in tRNA + diphosphate. Its function is as follows. Catalyzes the transfer of a dimethylallyl group onto the adenine at position 37 in tRNAs that read codons beginning with uridine, leading to the formation of N6-(dimethylallyl)adenosine (i(6)A). The protein is tRNA dimethylallyltransferase of Hyphomonas neptunium (strain ATCC 15444).